A 95-amino-acid polypeptide reads, in one-letter code: Co-chaperonin GroES (95 aa).

This sequence belongs to the GroES chaperonin family. In terms of assembly, heptamer of 7 subunits arranged in a ring. Interacts with the chaperonin GroEL.

It is found in the cytoplasm. Its function is as follows. Together with the chaperonin GroEL, plays an essential role in assisting protein folding. The GroEL-GroES system forms a nano-cage that allows encapsulation of the non-native substrate proteins and provides a physical environment optimized to promote and accelerate protein folding. GroES binds to the apical surface of the GroEL ring, thereby capping the opening of the GroEL channel. This Chlorobaculum parvum (strain DSM 263 / NCIMB 8327) (Chlorobium vibrioforme subsp. thiosulfatophilum) protein is Co-chaperonin GroES.